The following is a 1241-amino-acid chain: ATP-dependent helicase/nuclease subunit A (1241 aa).

The region spanning serine 12–arginine 485 is the UvrD-like helicase ATP-binding domain. Residue alanine 33 to threonine 40 participates in ATP binding. The region spanning glycine 505–glycine 805 is the UvrD-like helicase C-terminal domain.

It belongs to the helicase family. AddA subfamily. In terms of assembly, heterodimer of AddA and AddB/RexB. It depends on Mg(2+) as a cofactor.

It carries out the reaction Couples ATP hydrolysis with the unwinding of duplex DNA by translocating in the 3'-5' direction.. The catalysed reaction is ATP + H2O = ADP + phosphate + H(+). In terms of biological role, the heterodimer acts as both an ATP-dependent DNA helicase and an ATP-dependent, dual-direction single-stranded exonuclease. Recognizes the chi site generating a DNA molecule suitable for the initiation of homologous recombination. The AddA nuclease domain is required for chi fragment generation; this subunit has the helicase and 3' -&gt; 5' nuclease activities. This is ATP-dependent helicase/nuclease subunit A from Bacillus thuringiensis (strain Al Hakam).